The sequence spans 370 residues: Vasopressin V2 receptor (370 aa).

Residues 1 to 28 are disordered; the sequence is MLRATTSAVPRALSWPAAPGNGSEREPL. Topologically, residues 1 to 37 are extracellular; it reads MLRATTSAVPRALSWPAAPGNGSEREPLDDRDPLLAR. N-linked (GlcNAc...) asparagine glycosylation is present at Asn-21. Residues 38 to 62 form a helical membrane-spanning segment; that stretch reads VELALLSTVFVAVALSNGLVLGALV. Residues 63 to 76 are Cytoplasmic-facing; the sequence is RRGRRGRWAPMHVF. The chain crosses the membrane as a helical span at residues 77 to 97; sequence IGHLCLADLAVALFQVLPQLA. Topologically, residues 98-112 are extracellular; it reads WDATYRFRGPDALCR. Residues 113–134 traverse the membrane as a helical segment; sequence AVKYLQMVGMYASSYMILAMTL. The Cytoplasmic portion of the chain corresponds to 135 to 158; that stretch reads DRHRAICRPMLAYRHGGGARWNRP. The helical transmembrane segment at 159 to 179 threads the bilayer; it reads VLVAWAFSLLLSLPQLFIFAQ. The Extracellular portion of the chain corresponds to 180 to 199; that stretch reads RDVGDGSGVLDCWASFAEPW. Residues 200 to 219 traverse the membrane as a helical segment; sequence GLRAYVTWIALMVFVAPALG. The Cytoplasmic segment spans residues 220–270; that stretch reads IAACQVLIFREIHTSLVPGPAERAGGHRGGRRAGSPREGARVSAAMAKTAR. A helical membrane pass occupies residues 271–292; sequence MTLVIVAVYVLCWAPFFLVQLW. Residues 293–307 lie on the Extracellular side of the membrane; the sequence is SVWDPKAPREGPPFV. A helical transmembrane segment spans residues 308 to 327; sequence LLMLLASLNSCTNPWIYASF. Topologically, residues 328-370 are cytoplasmic; sequence SSSISSELRSLLCCPRRRTPPSLRPQEESCATASSFSARDTSS. 2 S-palmitoyl cysteine lipidation sites follow: Cys-340 and Cys-341. The interval 347-370 is disordered; that stretch reads PPSLRPQEESCATASSFSARDTSS. The span at 356–370 shows a compositional bias: polar residues; it reads SCATASSFSARDTSS.

The protein belongs to the G-protein coupled receptor 1 family. Vasopressin/oxytocin receptor subfamily. In terms of assembly, interacts with ARRDC4. Identified in a complex containing at least ARRDC4, V2R and HGS. Interacts with TMEM147.

The protein localises to the cell membrane. Its function is as follows. Receptor for arginine vasopressin. The activity of this receptor is mediated by G proteins which activate adenylate cyclase. Involved in renal water reabsorption. This chain is Vasopressin V2 receptor (AVPR2), found in Sus scrofa (Pig).